A 777-amino-acid chain; its full sequence is Intraflagellar transport protein 80 homolog (777 aa).

WD repeat units follow at residues 12–50 (KHQELVSCVGWTTAEELYSCSDDHQIVKWNLLTSETSLI), 104–143 (AHCGAVLAGRWNYEGTALVTVGEDGQVKIWSKTGMLRSTL), 145–185 (QQGI…LQWK), 186–225 (AHDGIILKVDWNSVNDLILSAGEDCKYKVWDSYGRVLYGS), 227–265 (PHEHPITSVAWAPDGELFAVGSFHTLRLCDKTGWSYALE), 267–306 (PNTGSIFNIAWSIDGTQIAGACGNGHVVFAHVVEQRWEWK), and 504–542 (KLGTMVHTLAWCDTCNILCGLQDTRFTVWYYPNAVYVDR). Residues 758-777 (TKERDRSSSGQSSKNTGLKP) are disordered. The segment covering 765–777 (SSGQSSKNTGLKP) has biased composition (polar residues).

In terms of assembly, component of the IFT complex B, at least composed of IFT20, IFT22, IFT25, IFT27, IFT46, IFT52, TRAF3IP1/IFT54, IFT57, IFT74, IFT80, IFT81, and IFT88. Interacts with IFT88. Interacts with IFT57 and IFT70B.

The protein localises to the cytoplasm. The protein resides in the cytoskeleton. It is found in the cilium basal body. Its subcellular location is the cilium axoneme. Its function is as follows. Component of the intraflagellar transport (IFT) complex B, which is essential for the development and maintenance of motile and sensory cilia. This is Intraflagellar transport protein 80 homolog (Ift80) from Rattus norvegicus (Rat).